We begin with the raw amino-acid sequence, 474 residues long: uncharacterized protein (474 aa).

Residues 1 to 23 (MLRRYLTLSFSSLLLLALLFLTG) form the signal peptide. Cys-24 is lipidated: N-palmitoyl cysteine. Cys-24 carries S-diacylglycerol cysteine lipidation.

The protein belongs to the MG067/MG068/MG395 family.

The protein localises to the cell membrane. This is an uncharacterized protein from Mycoplasma genitalium (strain ATCC 33530 / DSM 19775 / NCTC 10195 / G37) (Mycoplasmoides genitalium).